The sequence spans 231 residues: Large ribosomal subunit protein uL1 (231 aa).

It belongs to the universal ribosomal protein uL1 family. Part of the 50S ribosomal subunit.

Binds directly to 23S rRNA. The L1 stalk is quite mobile in the ribosome, and is involved in E site tRNA release. Its function is as follows. Protein L1 is also a translational repressor protein, it controls the translation of the L11 operon by binding to its mRNA. The chain is Large ribosomal subunit protein uL1 from Dechloromonas aromatica (strain RCB).